Here is a 160-residue protein sequence, read N- to C-terminus: Envelope glycoprotein L (160 aa).

Residues 1-22 (MASHKWLLQMIVFLKTITIAYC) form the signal peptide. The segment at 24 to 149 (HLQDDTPLFF…TNIPENGCVW (126 aa)) is interaction with gH. Residues 28–160 (DTPLFFGAKP…ADRLFQRVCQ (133 aa)) enclose the gL alphaherpesvirus-type domain. Disulfide bonds link Cys49–Cys80 and Cys147–Cys159.

The protein belongs to the herpesviridae glycoprotein L (gL) family. Alphaherpesvirinae gL subfamily. Interacts with glycoprotein H (gH); this interaction is necessary for the correct processing and cell surface expression of gH. The heterodimer gH/gL seems to interact with gB trimers during fusion.

The protein resides in the virion membrane. The protein localises to the host cell membrane. It localises to the host Golgi apparatus. Its subcellular location is the host trans-Golgi network. Its function is as follows. The heterodimer glycoprotein H-glycoprotein L is required for the fusion of viral and plasma membranes leading to virus entry into the host cell. Acts as a functional inhibitor of gH and maintains gH in an inhibited form. Upon binding to host integrins, gL dissociates from gH leading to activation of the viral fusion glycoproteins gB and gH. This chain is Envelope glycoprotein L, found in Varicella-zoster virus (strain Oka vaccine) (HHV-3).